Consider the following 507-residue polypeptide: Glucose-6-phosphate isomerase (507 aa).

Catalysis depends on glutamate 338, which acts as the Proton donor. Active-site residues include histidine 369 and lysine 479.

The protein belongs to the GPI family.

It localises to the cytoplasm. It carries out the reaction alpha-D-glucose 6-phosphate = beta-D-fructose 6-phosphate. It participates in carbohydrate biosynthesis; gluconeogenesis. It functions in the pathway carbohydrate degradation; glycolysis; D-glyceraldehyde 3-phosphate and glycerone phosphate from D-glucose: step 2/4. In terms of biological role, provides a gateway for fructose into the Entner-Doudouroff pathway. Catalyzes the reversible isomerization of glucose-6-phosphate to fructose-6-phosphate. This chain is Glucose-6-phosphate isomerase, found in Zymomonas mobilis subsp. mobilis (strain ATCC 31821 / ZM4 / CP4).